The chain runs to 151 residues: Protein SprT-like (151 aa).

The SprT-like domain occupies 6 to 147 (LQRMVENLSE…GHCNGKLRMK (142 aa)). His-67 contributes to the Zn(2+) binding site. Glu-68 is an active-site residue. His-71 contacts Zn(2+).

Belongs to the SprT family. The cofactor is Zn(2+).

It is found in the cytoplasm. This is Protein SprT-like from Staphylococcus aureus (strain Mu3 / ATCC 700698).